The chain runs to 541 residues: Protein yellow (541 aa).

The signal sequence occupies residues 1-21 (MFQDKGWVLLTLITLVSPSWA). The N-linked (GlcNAc...) asparagine glycan is linked to Asn-144.

It belongs to the major royal jelly protein family.

The protein localises to the secreted. Functionally, controls the pigmentation pattern of the adult cuticle and larval mouth parts. The polypeptide is Protein yellow (y) (Drosophila yakuba (Fruit fly)).